Reading from the N-terminus, the 482-residue chain is uncharacterized protein (482 aa).

Low complexity-rich tracts occupy residues 24 to 86 (SPNS…AQQQ) and 312 to 339 (TDSL…SQSI). Disordered stretches follow at residues 24 to 88 (SPNS…QQHY) and 307 to 376 (LHSQ…LIGK). The span at 342 to 363 (EEEEDGGEDEEEEGGEDNDNES) shows a compositional bias: acidic residues.

This is an uncharacterized protein from Dictyostelium discoideum (Social amoeba).